A 275-amino-acid chain; its full sequence is MAIKTYRPLTPTLRFQTKLVNEELTTDRPHKPLTKTKQRTGGRRNAGDITIWHRGGGHKRKLRLIDFKRDKSGVPATVATVEYDPNRSANIALLHYADGEKRYILHPVGLKVGQKVVSGPDADILVGNALPLRNIPAGTVVHNIELKPGKGAQMARSAGAQAQLVAKESDYALLKLPSGETRRVLVDCMATIGQVGNLDYENVAIGKAGRTRWMGVRPTNRGVVMNPVDHPHGGGEGKTSGGRHPVTPWGQPTRGYKTRNNKRTDKFIVTRRGKR.

Disordered regions lie at residues 24–48 and 224–264; these read LTTDRPHKPLTKTKQRTGGRRNAGD and VMNP…NKRT. Positions 31–42 are enriched in basic residues; that stretch reads KPLTKTKQRTGG.

Belongs to the universal ribosomal protein uL2 family. As to quaternary structure, part of the 50S ribosomal subunit. Forms a bridge to the 30S subunit in the 70S ribosome.

Its function is as follows. One of the primary rRNA binding proteins. Required for association of the 30S and 50S subunits to form the 70S ribosome, for tRNA binding and peptide bond formation. It has been suggested to have peptidyltransferase activity; this is somewhat controversial. Makes several contacts with the 16S rRNA in the 70S ribosome. The polypeptide is Large ribosomal subunit protein uL2 (Koribacter versatilis (strain Ellin345)).